A 1270-amino-acid polypeptide reads, in one-letter code: DNA-directed RNA polymerase subunit beta (1270 aa).

This sequence belongs to the RNA polymerase beta chain family. The RNAP catalytic core consists of 2 alpha, 1 beta, 1 beta' and 1 omega subunit. When a sigma factor is associated with the core the holoenzyme is formed, which can initiate transcription.

The catalysed reaction is RNA(n) + a ribonucleoside 5'-triphosphate = RNA(n+1) + diphosphate. DNA-dependent RNA polymerase catalyzes the transcription of DNA into RNA using the four ribonucleoside triphosphates as substrates. This is DNA-directed RNA polymerase subunit beta from Bacteroides thetaiotaomicron (strain ATCC 29148 / DSM 2079 / JCM 5827 / CCUG 10774 / NCTC 10582 / VPI-5482 / E50).